The following is a 492-amino-acid chain: MKKAILSVSNKTGIVEFAKALTQLNYELYSTGGTKRILDEANVPVRSVSDLTHFPEIMDGRVKTLHPAVHGGILADRNKPQHLNELSEQHIDLIDMVVVNLYPFQQTVANPDVTMDEAIENIDIGGPTMLRAAAKNYKHVTTIVHPADYHEVLTRLRNDSLDESYRQSLMIKVFEHTAEYDEAIVRFFKGDKETLRYGENPQQSAYFVRTSNAKHTIAGAKQLHGKQLSYNNIKDADATLALVKKFDTPAAVAVKHMNPCGVGIGDTIEQAFQHAYEADSQSIFGGIVALNRAVTPELAEQLHSIFLEVIIAPKFTDEALDILKQKKNVRLLEIDMTIDSNEEEFVSVSGGYLVQDKDNYVVPKEEMKVVTEVAPTDEQWEAMLLGWKVVPSVKSNAIILSNNKQTVGIGAGQMNRVGAAKIALERAIEINDHVALVSDGFFPMGDTVELAAQHGIKAIIQPGGSIKDQDSIDMANKHGIAMVVTGTRHFKH.

One can recognise an MGS-like domain in the interval M1–V144.

Belongs to the PurH family.

The catalysed reaction is (6R)-10-formyltetrahydrofolate + 5-amino-1-(5-phospho-beta-D-ribosyl)imidazole-4-carboxamide = 5-formamido-1-(5-phospho-D-ribosyl)imidazole-4-carboxamide + (6S)-5,6,7,8-tetrahydrofolate. The enzyme catalyses IMP + H2O = 5-formamido-1-(5-phospho-D-ribosyl)imidazole-4-carboxamide. Its pathway is purine metabolism; IMP biosynthesis via de novo pathway; 5-formamido-1-(5-phospho-D-ribosyl)imidazole-4-carboxamide from 5-amino-1-(5-phospho-D-ribosyl)imidazole-4-carboxamide (10-formyl THF route): step 1/1. The protein operates within purine metabolism; IMP biosynthesis via de novo pathway; IMP from 5-formamido-1-(5-phospho-D-ribosyl)imidazole-4-carboxamide: step 1/1. In Staphylococcus aureus (strain JH1), this protein is Bifunctional purine biosynthesis protein PurH.